We begin with the raw amino-acid sequence, 444 residues long: Methylenetetrahydrofolate--tRNA-(uracil-5-)-methyltransferase TrmFO (444 aa).

Residue 10-15 coordinates FAD; it reads GAGLAG.

This sequence belongs to the MnmG family. TrmFO subfamily. The cofactor is FAD.

It is found in the cytoplasm. It catalyses the reaction uridine(54) in tRNA + (6R)-5,10-methylene-5,6,7,8-tetrahydrofolate + NADH + H(+) = 5-methyluridine(54) in tRNA + (6S)-5,6,7,8-tetrahydrofolate + NAD(+). The enzyme catalyses uridine(54) in tRNA + (6R)-5,10-methylene-5,6,7,8-tetrahydrofolate + NADPH + H(+) = 5-methyluridine(54) in tRNA + (6S)-5,6,7,8-tetrahydrofolate + NADP(+). Its function is as follows. Catalyzes the folate-dependent formation of 5-methyl-uridine at position 54 (M-5-U54) in all tRNAs. In Streptococcus agalactiae serotype III (strain NEM316), this protein is Methylenetetrahydrofolate--tRNA-(uracil-5-)-methyltransferase TrmFO.